A 399-amino-acid polypeptide reads, in one-letter code: Bombesin receptor subtype-3 (399 aa).

Residues 1-41 (MSQRQPQSPNQTLISITNDTETSSSAVSNDTTPKGWTGDNS) are Extracellular-facing. N-linked (GlcNAc...) asparagine glycosylation is found at Asn10, Asn18, and Asn29. Residues 42–63 (PGIEALCAIYITYAVIISVGIL) form a helical membrane-spanning segment. The Cytoplasmic portion of the chain corresponds to 64-82 (GNAILIKVFFKTKSMQTVP). Residues 83–103 (NIFITSLAFGDLLLLLTCVPV) traverse the membrane as a helical segment. At 104–121 (DATHYLAEGWLFGKVGCK) the chain is on the extracellular side. An intrachain disulfide couples Cys120 to Cys203. A helical transmembrane segment spans residues 122 to 143 (VLSFIRLTSVGVSVFTLTILSA). Residues 144–163 (DRYKAVVKPLERQPSNAILK) lie on the Cytoplasmic side of the membrane. The helical transmembrane segment at 164–184 (TCAKAGGIWIMAMIFALPEAI) threads the bilayer. Residues 185-220 (FSNVYTFQDPNRNVTFESCNSYPISERLLQEIHSLL) lie on the Extracellular side of the membrane. The chain crosses the membrane as a helical span at residues 221-241 (CFLVFYIIPLSIISVYYSLIA). The Cytoplasmic segment spans residues 242-272 (RTLYKSTLNIPTEEQSHARKQIESRKRIAKT). The helical transmembrane segment at 273–293 (VLVLVALFALCWLPNHLLYLY) threads the bilayer. Over 294-313 (HSFTYESYAEPSDVPFVVTI) the chain is Extracellular. Residues 314–333 (FSRVLAFSNSCVNPFALYWL) traverse the membrane as a helical segment. The Cytoplasmic segment spans residues 334–399 (SKTFQKHFKA…STAKKGEDKV (66 aa)). Cys347 carries the S-palmitoyl cysteine lipid modification.

Belongs to the G-protein coupled receptor 1 family. In terms of assembly, interacts with C6orf89.

It is found in the cell membrane. Its function is as follows. Role in sperm cell division, maturation, or function. This receptor mediates its action by association with G proteins that activate a phosphatidylinositol-calcium second messenger system. The polypeptide is Bombesin receptor subtype-3 (Brs3) (Rattus norvegicus (Rat)).